We begin with the raw amino-acid sequence, 145 residues long: Basic phospholipase A2 GL1-1 (145 aa).

The first 21 residues, 1–21 (MYPAHLLVLLAVCVSLLGASA), serve as a signal peptide directing secretion. A propeptide spanning residues 22–27 (IPPLPL) is cleaved from the precursor. Intrachain disulfides connect Cys-38/Cys-98, Cys-54/Cys-144, Cys-56/Cys-72, Cys-71/Cys-125, Cys-78/Cys-118, Cys-87/Cys-111, and Cys-105/Cys-116. Ca(2+) contacts are provided by Tyr-55, Gly-57, and Gly-59. His-75 is an active-site residue. Asp-76 is a Ca(2+) binding site. Residue Asp-119 is part of the active site.

The protein belongs to the phospholipase A2 family. Group I subfamily. D49 sub-subfamily. It depends on Ca(2+) as a cofactor. In terms of tissue distribution, expressed by the venom gland.

The protein resides in the secreted. The enzyme catalyses a 1,2-diacyl-sn-glycero-3-phosphocholine + H2O = a 1-acyl-sn-glycero-3-phosphocholine + a fatty acid + H(+). Its function is as follows. PLA2 catalyzes the calcium-dependent hydrolysis of the 2-acyl groups in 3-sn-phosphoglycerides. This Laticauda semifasciata (Black-banded sea krait) protein is Basic phospholipase A2 GL1-1.